Reading from the N-terminus, the 1257-residue chain is Neurocan core protein (1257 aa).

Residues 1–22 form the signal peptide; that stretch reads MGAESVWASGLLVLWLLLLVSG. The Ig-like V-type domain maps to 37–157; that stretch reads HMLKSGSGPI…EQDLVTLEVT (121 aa). 5 disulfides stabilise this stretch: C58–C139, C181–C252, C205–C226, C279–C354, and C303–C324. N121 carries an N-linked (GlcNAc...) asparagine glycan. 2 consecutive Link domains span residues 159 to 254 and 258 to 356; these read VVFH…YCFA and GGEV…YCFR. N339 is a glycosylation site (N-linked (GlcNAc...) asparagine). The segment at 361–391 is disordered; that stretch reads TPQRGDSEIPSSGDEGEIVSAEGPPAPELKP. O-linked (Xyl...) (chondroitin sulfate) serine glycosylation is found at S380 and S410. Residues 447-459 are compositionally biased toward low complexity; it reads SSTGVPSPSSLGV. Disordered regions lie at residues 447 to 493, 550 to 610, and 683 to 707; these read SSTG…FQQQ, GSLG…AVPS, and GAEDPETPFQTTMAAPGEASHGSPE. A compositionally biased stretch (polar residues) spans 464-473; it reads TTPSGTQVAP. The segment covering 569 to 580 has biased composition (low complexity); sequence SPSTVPSTDSTP. An N-linked (GlcNAc...) asparagine glycan is attached at N737. A glycan (O-linked (Xyl...) (chondroitin sulfate) serine) is linked at S944. The 37-residue stretch at 949–985 folds into the EGF-like 1 domain; it reads PTDPCENNPCLHGGTCRTNGTMYGCSCDQGYAGENCE. 11 cysteine pairs are disulfide-bonded: C953-C964, C958-C973, C975-C984, C991-C1002, C996-C1011, C1013-C1022, C1029-C1040, C1057-C1149, C1125-C1141, C1156-C1199, and C1185-C1212. N967 carries N-linked (GlcNAc...) asparagine glycosylation. An EGF-like 2; calcium-binding domain is found at 987 to 1023; it reads DIDDCLCSPCENGGTCIDEVNGFICLCLPSYGGNLCE. Residues 1025-1154 form the C-type lectin domain; it reads DTEGCDRGWH…LPYVCKKGTV (130 aa). Residues 1154-1214 form the Sushi domain; that stretch reads VLCGPPPAVE…WDRPQIVCTK (61 aa). N1164 carries N-linked (GlcNAc...) asparagine glycosylation. The span at 1215–1244 shows a compositional bias: basic residues; it reads PRRSHRMRRHHHHPHRHHKPRKEHRKHKRH. The interval 1215–1257 is disordered; that stretch reads PRRSHRMRRHHHHPHRHHKPRKEHRKHKRHPAEDWEKDEGDFC.

The protein belongs to the aggrecan/versican proteoglycan family. Post-translationally, two isoforms were found that probably arise by proteolytic processing. The large isoform is predominant in early postnatal brain, the small isoform is found in adult brain. O-glycosylated; contains chondroitin sulfate. As to expression, early postnatal and adult brain; not expressed in kidney, lung, liver and muscle.

Its subcellular location is the secreted. Its function is as follows. May modulate neuronal adhesion and neurite growth during development by binding to neural cell adhesion molecules (NG-CAM and N-CAM). Chondroitin sulfate proteoglycan; binds to hyaluronic acid. The sequence is that of Neurocan core protein (Ncan) from Rattus norvegicus (Rat).